A 98-amino-acid chain; its full sequence is DNA-binding protein Fis (98 aa).

The segment at residues 74-93 (QTRAATMLGINRGTLRKKLK) is a DNA-binding region (H-T-H motif).

Belongs to the transcriptional regulatory Fis family. Homodimer.

Functionally, activates ribosomal RNA transcription. Plays a direct role in upstream activation of rRNA promoters. The protein is DNA-binding protein Fis of Histophilus somni (strain 2336) (Haemophilus somnus).